Here is a 331-residue protein sequence, read N- to C-terminus: Probable serine hydrolase (331 aa).

Residues 1-28 (MGQTRVAATTAAQSPAAELSPETNGQTE) form a disordered region. Low complexity predominate over residues 7–17 (AATTAAQSPAA). In terms of domain architecture, AB hydrolase-1 spans 63-163 (PIIALHGWQD…EVEKLINIDI (101 aa)). The active site involves S138.

The protein belongs to the AB hydrolase superfamily. In terms of tissue distribution, ubiquitously expressed before embryonic stage 11. At stage 11, expression is concentrated in the foregut and posterior midgut. By stage 15, in gastric caeca, pharynx, posterior spiracles and anterior edge of midgut. At the end of embryogenesis, expression is confined to gastric caeca. During third instar larvae, expressed at low levels in gastric caeca, midgut and hindgut and high level in fat body.

Functionally, may have a role in detoxification and digestion during embryogenesis and larval development. In Drosophila melanogaster (Fruit fly), this protein is Probable serine hydrolase (kraken).